We begin with the raw amino-acid sequence, 196 residues long: Ras-related protein RabC (196 aa).

13–20 (GESGVGKS) serves as a coordination point for GTP. Residues 35 to 43 (FAPTLGVDF) carry the Effector region motif. GTP-binding positions include 63–67 (DTAGQ) and 121–124 (NKSD). Residues Cys-195 and Cys-196 are each lipidated (S-geranylgeranyl cysteine).

Belongs to the small GTPase superfamily. Rab family.

Its subcellular location is the cell membrane. The chain is Ras-related protein RabC (rabC) from Dictyostelium discoideum (Social amoeba).